We begin with the raw amino-acid sequence, 107 residues long: MKTLLLALAVVVLVCLGSANELGLGRQRVDRRRRQAVGAPYGLCFQCNQKSSRDCLNPKRCPYFHRTCYTLYNSGGQWTVKGCAKMCPTAGPNERVKCCYKPECNND.

An N-terminal signal peptide occupies residues 1–19; the sequence is MKTLLLALAVVVLVCLGSA. A propeptide spanning residues 20 to 34 is cleaved from the precursor; that stretch reads NELGLGRQRVDRRRR. Disulfide bonds link Cys44–Cys68, Cys47–Cys55, Cys61–Cys83, Cys87–Cys98, and Cys99–Cys104.

Belongs to the three-finger toxin family. Ancestral subfamily. Boigatoxin sub-subfamily. As to quaternary structure, monomer. Expressed by the venom gland.

It is found in the secreted. In terms of biological role, mammal-specific neurotoxin (tested on mice). Not toxic to lizards (tested on geckos). The polypeptide is Sulmotoxin 1 (Spilotes sulphureus (Amazon puffing snake)).